Consider the following 321-residue polypeptide: AA9 family lytic polysaccharide monooxygenase D (321 aa).

An N-terminal signal peptide occupies residues Met-1 to Ala-21. His-22 is a Cu(2+) binding site. 2 disulfides stabilise this stretch: Cys-75-Cys-192 and Cys-116-Cys-120. N-linked (GlcNAc...) asparagine glycosylation occurs at Asn-78. His-105 is a Cu(2+) binding site. Residue Asn-152 is glycosylated (N-linked (GlcNAc...) asparagine). The O2 site is built by His-178 and Gln-187. Residue Tyr-189 coordinates Cu(2+). A glycan (N-linked (GlcNAc...) asparagine) is linked at Asn-266.

It belongs to the polysaccharide monooxygenase AA9 family. Cu(2+) is required as a cofactor.

Its subcellular location is the secreted. The enzyme catalyses [(1-&gt;4)-beta-D-glucosyl]n+m + reduced acceptor + O2 = 4-dehydro-beta-D-glucosyl-[(1-&gt;4)-beta-D-glucosyl]n-1 + [(1-&gt;4)-beta-D-glucosyl]m + acceptor + H2O.. Functionally, lytic polysaccharide monooxygenase (LPMO) that depolymerizes crystalline and amorphous polysaccharides via the oxidation of scissile alpha- or beta-(1-4)-glycosidic bonds, yielding C1 or C4 oxidation products. Catalysis by LPMOs requires the reduction of the active-site copper from Cu(II) to Cu(I) by a reducing agent and H(2)O(2) or O(2) as a cosubstrate. In Geotrichum candidum (Oospora lactis), this protein is AA9 family lytic polysaccharide monooxygenase D.